The sequence spans 382 residues: MKWLVLLGLVAFSECIVKIPLRRVKTMRNTLSGKKMLNSFLKEHAYRLSQISFRASNLTIHPLRNIMDMLYVGNITIGTPPQEFQVVFDTGSSDLLVPSINCLSPTKRPCSKQDKFKHHQSSTFRFTNDTFRIYFGSGTMRGFVAHDTVRIGDLVSTDQPFGLIFLESWLDIPFDGILGLNYPKISFSGAIPIFDKLKNEGAFSEPVFAFYLNKDKQEGSVVMFGGVDHRYYKGELNWVPLIHPGEWSIPLDRISMRRKVIACSGGCEALVGTGTSLILGPRTVVENIQKHIGATQQCFEYFVSCSAVYALPSIVFTINGINYPVPPQAYLVKDSRGQCYSPFQVNRANPSAENWILGDVFLRRYFSVFDRGNDRIGLARAV.

A signal peptide spans 1 to 15 (MKWLVLLGLVAFSEC). Residues 16–53 (IVKIPLRRVKTMRNTLSGKKMLNSFLKEHAYRLSQISF) constitute a propeptide, activation peptide. N-linked (GlcNAc...) asparagine glycans are attached at residues asparagine 57 and asparagine 74. Residues 71-379 (YVGNITIGTP…DRGNDRIGLA (309 aa)) enclose the Peptidase A1 domain. Residues cysteine 102 and cysteine 110 are joined by a disulfide bond. Asparagine 128 carries an N-linked (GlcNAc...) asparagine glycan. Cystine bridges form between cysteine 263–cysteine 267 and cysteine 305–cysteine 339.

The protein belongs to the peptidase A1 family. In terms of tissue distribution, trophoblast and placental tissue. Produced specifically in the invasive binucleate cells of the placenta.

Its subcellular location is the secreted. It is found in the extracellular space. In terms of biological role, has no proteolytic activity. The sequence is that of Pregnancy-associated glycoprotein 1 from Ovis aries (Sheep).